A 256-amino-acid chain; its full sequence is Gluconate 5-dehydrogenase (256 aa).

Position 15–39 (15–39 (LVTGASRGIGLTLAKGLARYGAEVV)) interacts with NADP(+). Ser-147 provides a ligand contact to substrate. The Proton acceptor role is filled by Tyr-160.

This sequence belongs to the short-chain dehydrogenases/reductases (SDR) family. In terms of assembly, homodimer.

Its subcellular location is the cytoplasm. The catalysed reaction is D-gluconate + NADP(+) = 5-dehydro-D-gluconate + NADPH + H(+). In terms of biological role, catalyzes the reversible NADP-dependent oxidation of gluconate to 5-ketogluconate. Is involved in the non-phosphorylative, ketogenic oxidation of glucose. Is almost inactive with NAD as cosubstrate. Displays high substrate specificity since D-Glucose, D-sorbitol, and D-mannitol are not oxidized by the enzyme, and 2-ketogluconate and L-sorbose are not reduced. Can accept D-fructose as a substrate, with a rate that is only 10% of the rate of 5-ketogluconate reduction. This is Gluconate 5-dehydrogenase from Gluconobacter oxydans (strain 621H) (Gluconobacter suboxydans).